A 590-amino-acid polypeptide reads, in one-letter code: MAASSYVDGERDMEKGGMILLQSSENQNPMIDPSPTPSPSATATAPALVLSNSGKRMDQAGKKKYVKQVTGRHNDTELHLAAQRGDLAAVQQILKDINSQMEGILSGEEFDAEVAEIRASIVNEVNELGETALFTAADKGHLDVVKELLKYSSRESIAKKNRSGYDPLHIAAIQGHHAIVEVLLDHDATLSQTFGPSNATPLVSAAMRGHTEVVNQLLSKAGNLLEISRSNNKNALHLAARQGHVEVIKALLSKDPQLARRIDKKGQTALHMAVKGQSSEVVKLLLDADPAIVMQPDKSCNTALHVATRKKRAEIVELLLSLPDTNANTLTRDHKTALDIAEGLPLSEESSYIKECLARSGALRANELNQPRDELRSTVTQIKNDVHIQLEQTKRTNKNVHNISKELRKLHREGINNATNSVTVVAVLFATVAFAAIFTVPGGDNNDGSAVVVGRASFKIFFIFNALALFTSLAVVVVQITLVRGETKAEKRVVEVINKLMWLASMCTSVAFLASSYIVVGRKNEWAAELVTVVGGVIMAGVLGTMTYYVVKSKRTRSMRKKVKSARRSGSNSWHHSDFSNSEVDPIFAI.

Residues 25–44 (ENQNPMIDPSPTPSPSATAT) form a disordered region. ANK repeat units follow at residues 73 to 102 (HNDT…SQME), 128 to 157 (LGET…RESI), 163 to 192 (SGYD…TLSQ), 197 to 226 (SNAT…NLLE), 231 to 260 (NNKN…QLAR), 265 to 294 (KGQT…AIVM), and 299 to 329 (SCNT…NANT). 4 consecutive transmembrane segments (helical) span residues 422–442 (VTVV…TVPG), 460–480 (IFFI…VVQI), 500–520 (LMWL…YIVV), and 531–551 (VTVV…YYVV).

As to quaternary structure, interacts with REM19/RTV1. Expressed in roots, shoots, leaf vasculature and stems.

It is found in the cell membrane. In terms of biological role, involved in salt stress tolerance. May act through abscisic acid (ABA) signaling pathways and promote reactive oxygen species (ROS) production. The polypeptide is Ankyrin repeat-containing protein ITN1 (Arabidopsis thaliana (Mouse-ear cress)).